The following is a 234-amino-acid chain: Phosphoglycolate phosphatase (234 aa).

The Nucleophile role is filled by Asp13. Positions 13, 15, and 175 each coordinate Mg(2+).

Belongs to the HAD-like hydrolase superfamily. CbbY/CbbZ/Gph/YieH family. Monomer. Requires Mg(2+) as cofactor. Chloride is required as a cofactor.

The enzyme catalyses 2-phosphoglycolate + H2O = glycolate + phosphate. It participates in organic acid metabolism; glycolate biosynthesis; glycolate from 2-phosphoglycolate: step 1/1. Its function is as follows. Specifically catalyzes the dephosphorylation of 2-phosphoglycolate. Is involved in the dissimilation of the intracellular 2-phosphoglycolate formed during the DNA repair of 3'-phosphoglycolate ends, a major class of DNA lesions induced by oxidative stress. This Pectobacterium atrosepticum (strain SCRI 1043 / ATCC BAA-672) (Erwinia carotovora subsp. atroseptica) protein is Phosphoglycolate phosphatase.